Reading from the N-terminus, the 175-residue chain is DASH complex subunit DAM1 (175 aa).

The interval 1–39 (MAPEDTNPQSSHRRTRSTSRSRPTTPLRPSSRSSFRSSA) is disordered. The segment covering 20 to 39 (RSRPTTPLRPSSRSSFRSSA) has biased composition (low complexity).

The protein belongs to the DASH complex DAM1 family. Component of the DASH complex consisting of ASK1, DAD1, DAD2, DAD3, DAD4, DAM1, DUO1, HSK3, SPC19 and SPC34, with a stoichiometry of one copy of each subunit per complex. Multiple DASH complexes oligomerize to form a ring that encircles spindle microtubules and organizes the rod-like NDC80 complexes of the outer kinetochore. DASH complex oligomerization strengthens microtubule attachments. On cytoplasmic microtubules, DASH complexes appear to form patches instead of rings.

It is found in the chromosome. It localises to the centromere. The protein localises to the kinetochore. The protein resides in the cytoplasm. Its subcellular location is the cytoskeleton. It is found in the spindle. It localises to the nucleus. Functionally, component of the DASH complex that connects microtubules with kinetochores and couples microtubule depolymerisation to chromosome movement; it is involved in retrieving kinetochores to the spindle poles before their re-orientation on the spindle in early mitosis and allows microtubule depolymerization to pull chromosomes apart and resist detachment during anaphase. Kinetochores, consisting of a centromere-associated inner segment and a microtubule-contacting outer segment, play a crucial role in chromosome segregation by mediating the physical connection between centromeric DNA and microtubules. Kinetochores also serve as an input point for the spindle assembly checkpoint, which delays anaphase until all chromosomes have bioriented on the mitotic spindle. This chain is DASH complex subunit DAM1, found in Chaetomium thermophilum (strain DSM 1495 / CBS 144.50 / IMI 039719) (Thermochaetoides thermophila).